The chain runs to 304 residues: Quinolinate synthase 1 (304 aa).

Iminosuccinate contacts are provided by His-24 and Ser-41. Cys-86 serves as a coordination point for [4Fe-4S] cluster. Residues 112–114 (YVN) and Ser-129 each bind iminosuccinate. Cys-171 provides a ligand contact to [4Fe-4S] cluster. Iminosuccinate is bound by residues 197–199 (HPE) and Thr-214. Cys-259 is a [4Fe-4S] cluster binding site.

This sequence belongs to the quinolinate synthase family. Type 2 subfamily. [4Fe-4S] cluster serves as cofactor.

The protein localises to the cytoplasm. It carries out the reaction iminosuccinate + dihydroxyacetone phosphate = quinolinate + phosphate + 2 H2O + H(+). It functions in the pathway cofactor biosynthesis; NAD(+) biosynthesis; quinolinate from iminoaspartate: step 1/1. In terms of biological role, catalyzes the condensation of iminoaspartate with dihydroxyacetone phosphate to form quinolinate. This is Quinolinate synthase 1 from Methanosarcina acetivorans (strain ATCC 35395 / DSM 2834 / JCM 12185 / C2A).